A 502-amino-acid polypeptide reads, in one-letter code: ATP synthase subunit alpha (502 aa).

The tract at residues 115–136 is disordered; that stretch reads VDGLGPIHTTKTRPIESPAPGV. Position 169-176 (169-176) interacts with ATP; it reads GDRQTGKT.

The protein belongs to the ATPase alpha/beta chains family. In terms of assembly, F-type ATPases have 2 components, CF(1) - the catalytic core - and CF(0) - the membrane proton channel. CF(1) has five subunits: alpha(3), beta(3), gamma(1), delta(1), epsilon(1). CF(0) has three main subunits: a(1), b(2) and c(9-12). The alpha and beta chains form an alternating ring which encloses part of the gamma chain. CF(1) is attached to CF(0) by a central stalk formed by the gamma and epsilon chains, while a peripheral stalk is formed by the delta and b chains.

The protein resides in the cell membrane. It carries out the reaction ATP + H2O + 4 H(+)(in) = ADP + phosphate + 5 H(+)(out). Functionally, produces ATP from ADP in the presence of a proton gradient across the membrane. The alpha chain is a regulatory subunit. The chain is ATP synthase subunit alpha from Bacillus cytotoxicus (strain DSM 22905 / CIP 110041 / 391-98 / NVH 391-98).